The sequence spans 387 residues: Mannose-6-phosphate isomerase (387 aa).

It belongs to the N-acylglucosamine 2-epimerase family.

It carries out the reaction D-mannose 6-phosphate = D-fructose 6-phosphate. In Rhizobium meliloti (strain 1021) (Ensifer meliloti), this protein is Mannose-6-phosphate isomerase (pmi).